The sequence spans 241 residues: Beta-nerve growth factor (241 aa).

The signal sequence occupies residues 1-18 (MSMLFYTLITAFLIGIQA). A propeptide spanning residues 19-121 (EPHSESNVPA…PVNRTHRSKR (103 aa)) is cleaved from the precursor. N-linked (GlcNAc...) asparagine glycosylation is found at N69, N114, and N166. Intrachain disulfides connect C136-C201, C179-C229, and C189-C231.

Belongs to the NGF-beta family. Homodimer. The homodimer interacts with a single NTRK1 chain. The homodimer interacts with a single NGFR chain. The NGF dimer interacts with a single SORCS2 chain (via extracellular domain). The NGF precursor (proNGF) binds to a receptor complex formed by SORT1 and NGFR, which leads to NGF endocytosis. Both mature NGF and the immature NGF precursor (proNGF) interact with SORCS2 and with the heterodimer formed by SORCS2 and NGFR (via extracellular domains). The NGF precursor (proNGF) has much higher affinity for SORCS2 than mature NGF. The NGF precursor (proNGF) has much higher affinity for SORT1 than mature NGF. Interacts with ADAM10 in a divalent cation-dependent manner. Interacts with SORCS3.

It is found in the secreted. Its subcellular location is the endosome lumen. In terms of biological role, nerve growth factor is important for the development and maintenance of the sympathetic and sensory nervous systems. Extracellular ligand for the NTRK1 and NGFR receptors, activates cellular signaling cascades through those receptor tyrosine kinase to regulate neuronal proliferation, differentiation and survival. Inhibits metalloproteinase dependent proteolysis of platelet glycoprotein VI. The sequence is that of Beta-nerve growth factor (NGF) from Saimiri boliviensis boliviensis (Bolivian squirrel monkey).